The chain runs to 676 residues: tRNA uridine 5-carboxymethylaminomethyl modification enzyme MnmG (676 aa).

Residue 15–20 coordinates FAD; it reads GAGHAG. 316 to 330 contacts NAD(+); that stretch reads GPRYCPSIEDKIVRF.

This sequence belongs to the MnmG family. As to quaternary structure, homodimer. Heterotetramer of two MnmE and two MnmG subunits. FAD serves as cofactor.

The protein resides in the cytoplasm. In terms of biological role, NAD-binding protein involved in the addition of a carboxymethylaminomethyl (cmnm) group at the wobble position (U34) of certain tRNAs, forming tRNA-cmnm(5)s(2)U34. This chain is tRNA uridine 5-carboxymethylaminomethyl modification enzyme MnmG, found in Roseiflexus castenholzii (strain DSM 13941 / HLO8).